Consider the following 268-residue polypeptide: Microtubule-associated protein RP/EB family member 1 (268 aa).

A2 is modified (N-acetylalanine). In terms of domain architecture, Calponin-homology (CH) spans 14–116 (NLSRHDMLAW…FVQWFKKFFD (103 aa)). N6-crotonyllysine is present on K66. The residue at position 124 (Y124) is a Phosphotyrosine. The tract at residues 124 to 268 (YDPVAARQGQ…GGPQEEQEEY (145 aa)) is interaction with MTUS2/TIP150. A compositionally biased stretch (low complexity) spans 147 to 160 (NKPKKPLSSSSAAP). Residues 147 to 184 (NKPKKPLSSSSAAPQRPITTHRTTATPKAGPGVVRKNP) form a disordered region. The residue at position 155 (S155) is a Phosphoserine. Over residues 163 to 172 (PITTHRTTAT) the composition is skewed to polar residues. The EB1 C-terminal domain maps to 185–255 (GVGNGDDEAA…LYATDEGFVI (71 aa)). The segment at 185 to 268 (GVGNGDDEAA…GGPQEEQEEY (84 aa)) is interaction with CDK5RAP2. Residues 206 to 211 (TVEDLE) are interaction with APC. A DCTN1-binding region spans residues 208 to 268 (EDLEKERDFY…GGPQEEQEEY (61 aa)). K220 is modified (N6-acetyllysine). The segment at 220–242 (KLRNIELICQENEGENNPVLQRI) is APC-binding. Positions 232–255 (EGENNPVLQRIVDILYATDEGFVI) are interaction with SKA1.

It belongs to the MAPRE family. In terms of assembly, homodimer. Heterodimer with MAPRE3. Interacts with DCTN1, DCTN2, TERF1 and dynein intermediate chain. Interaction with DIAPH1 and DIAPH2. Interacts (via C-terminal residues 206-211) with APC (via C-terminal residues 2674-2845); the interaction inhibits association with and bundling of F-actin. Interacts with CLASP2, DST, KIF2C and STIM1; probably required for their targeting to the growing microtubule plus ends. Interacts with MTUS2; interaction is direct and probably targets MTUS2 to microtubules. Interacts (via C-terminus) with SKA1 (via SXIP motif); the interaction is direct and stabilizes the kinetochore-microtubule attachment of the SKA1 complex. Interacts with APC2. Interacts with CLASP1. Interacts with CDK5RAP2. Interacts with MACF1. Interacts with RABL2/RABL2A; binds preferentially to GTP-bound RABL2. Interacts with KCNAB2. Interacts (via C-terminus) with CLIP1. Interacts with SLAIN2 and SLAIN1. Interacts with KIF18B; this interaction is required for efficient accumulation of KIF18B at microtubule plus ends. Interacts with MISP. Interacts with KNSTRN. Interacts with NCKAP5L. Interacts with CAMSAP2. Interacts with PDE4DIP isoform 13/MMG8/SMYLE; this interaction is required for its recruitment to the Golgi apparatus. Forms a pericentrosomal complex with AKAP9, CDK5RAP2 and PDE4DIP isoform 13/MMG8/SMYLE; within this complex, MAPRE1 binding to CDK5RAP2 may be mediated by PDE4DIP. Interacts with AKNA. Interacts with GAS2L1, GAS2L2, and GAS2L3. In terms of processing, acetylation at Lys-220 by KAT2B/PCAF promotes dynamic kinetochore-microtubule interactions in early mitosis. Crotonylated by KAT5 during mitosis, promoting astral microtubule plasticity and dynamic connection between astral microtubules and the cortex during mitotic chromosome segregation, thereby ensuring accurate spindle positioning in mitosis. Decrotonylated by HDAC3.

It localises to the cytoplasm. The protein localises to the cytoskeleton. The protein resides in the microtubule organizing center. It is found in the centrosome. Its subcellular location is the golgi apparatus. It localises to the spindle. The protein localises to the spindle pole. Functionally, plus-end tracking protein (+TIP) that binds to the plus-end of microtubules and regulates the dynamics of the microtubule cytoskeleton. Recruits other +TIP proteins to microtubules by binding to a conserved Ser-X-Leu-Pro (SXLP) motif in their polypeptide chains. Promotes cytoplasmic microtubule nucleation and elongation. Involved in mitotic spindle positioning by stabilizing microtubules and promoting dynamic connection between astral microtubules and the cortex during mitotic chromosome segregation. Assists chromosome alignment in metaphase by recruiting the SKA complex to the spindle and stabilizing its interactions with microtubule bundles (K-fibers). Also acts as a regulator of minus-end microtubule organization: interacts with the complex formed by AKAP9 and PDE4DIP, leading to recruit CAMSAP2 to the Golgi apparatus, thereby tethering non-centrosomal minus-end microtubules to the Golgi, an important step for polarized cell movement. Promotes elongation of CAMSAP2-decorated microtubule stretches on the minus-end of microtubules. Acts as a regulator of autophagosome transport via interaction with CAMSAP2. Functions downstream of Rho GTPases and DIAPH1 in stable microtubule formation. May play a role in cell migration. The sequence is that of Microtubule-associated protein RP/EB family member 1 (MAPRE1) from Bos taurus (Bovine).